A 352-amino-acid chain; its full sequence is 4-hydroxy-3-methylbut-2-en-1-yl diphosphate synthase (flavodoxin) (352 aa).

Residues cysteine 265, cysteine 268, cysteine 300, and glutamate 307 each contribute to the [4Fe-4S] cluster site.

This sequence belongs to the IspG family. It depends on [4Fe-4S] cluster as a cofactor.

It carries out the reaction (2E)-4-hydroxy-3-methylbut-2-enyl diphosphate + oxidized [flavodoxin] + H2O + 2 H(+) = 2-C-methyl-D-erythritol 2,4-cyclic diphosphate + reduced [flavodoxin]. It functions in the pathway isoprenoid biosynthesis; isopentenyl diphosphate biosynthesis via DXP pathway; isopentenyl diphosphate from 1-deoxy-D-xylulose 5-phosphate: step 5/6. Functionally, converts 2C-methyl-D-erythritol 2,4-cyclodiphosphate (ME-2,4cPP) into 1-hydroxy-2-methyl-2-(E)-butenyl 4-diphosphate. This is 4-hydroxy-3-methylbut-2-en-1-yl diphosphate synthase (flavodoxin) from Persephonella marina (strain DSM 14350 / EX-H1).